The sequence spans 324 residues: HPr kinase/phosphorylase (324 aa).

Residues H146 and K167 contribute to the active site. Residue 161–168 (GDSGLGKS) participates in ATP binding. S168 serves as a coordination point for Mg(2+). Residue D185 is the Proton acceptor; for phosphorylation activity. Proton donor; for dephosphorylation activity of the active site. Residues 209–218 (LEVRGLGLLD) form an important for the catalytic mechanism of both phosphorylation and dephosphorylation region. E210 is a Mg(2+) binding site. The active site involves R250. The interval 271–276 (QVAAGR) is important for the catalytic mechanism of dephosphorylation.

This sequence belongs to the HPrK/P family. Homohexamer. The cofactor is Mg(2+).

The enzyme catalyses [HPr protein]-L-serine + ATP = [HPr protein]-O-phospho-L-serine + ADP + H(+). It carries out the reaction [HPr protein]-O-phospho-L-serine + phosphate + H(+) = [HPr protein]-L-serine + diphosphate. In terms of biological role, catalyzes the ATP- as well as the pyrophosphate-dependent phosphorylation of a specific serine residue in HPr, a phosphocarrier protein of the phosphoenolpyruvate-dependent sugar phosphotransferase system (PTS). HprK/P also catalyzes the pyrophosphate-producing, inorganic phosphate-dependent dephosphorylation (phosphorolysis) of seryl-phosphorylated HPr (P-Ser-HPr). This is HPr kinase/phosphorylase from Ralstonia nicotianae (strain ATCC BAA-1114 / GMI1000) (Ralstonia solanacearum).